The chain runs to 165 residues: Putative defense protein Hdd11 (165 aa).

An N-terminal signal peptide occupies residues 1–17; sequence MWATYVFIAVSLACANG. Residues 18–165 enclose the Reelin domain; it reads YSSGAPESVC…VESGPVKVIS (148 aa). A disulfide bond links cysteine 27 and cysteine 104.

This sequence belongs to the insect defense protein family.

The protein resides in the secreted. As this protein is expressed upon bacterial infection, it may have antimicrobial activity. The polypeptide is Putative defense protein Hdd11 (Hyphantria cunea (Fall webworm moth)).